A 347-amino-acid polypeptide reads, in one-letter code: Autoinducer 2 import system permease protein LsrC (347 aa).

The next 9 membrane-spanning stretches (helical) occupy residues Leu-14–Val-34, Met-39–Leu-59, Gly-72–Cys-92, Leu-93–Leu-113, Ile-115–Trp-135, Val-155–Trp-175, Leu-213–Pro-233, Val-249–Ala-269, and Ile-284–Asp-304.

It belongs to the binding-protein-dependent transport system permease family. AraH/RbsC subfamily. As to quaternary structure, the complex is composed of two ATP-binding proteins (LsrA), two transmembrane proteins (LsrC and LsrD) and a solute-binding protein (LsrB).

The protein localises to the cell inner membrane. In terms of biological role, part of the ABC transporter complex LsrABCD involved in autoinducer 2 (AI-2) import. Probably responsible for the translocation of the substrate across the membrane. In Salmonella typhi, this protein is Autoinducer 2 import system permease protein LsrC (lsrC).